A 473-amino-acid polypeptide reads, in one-letter code: Endoglucanase B (473 aa).

A signal peptide spans 1–17 (MKFLNTFSLLSLAIIGS). The catalytic stretch occupies residues 18–367 (KAMKNISSKE…GLIKGLGNSI (350 aa)). The active-site Proton donor is the Glu-173. Residue Glu-295 is the Nucleophile of the active site. The tract at residues 365-387 (NSIKTRTTIRRTTTTTTSQSQPT) is linker. CBM10 domains are found at residues 391–427 (SCFSVNLGYSCCNGCEVEYTDSDGEWGVENGNWCGIK) and 436–473 (ICWSEKLGYPCCQNTSSVVYTDNDGKWGVENGNWCGIY).

Belongs to the glycosyl hydrolase 5 (cellulase A) family.

It carries out the reaction Endohydrolysis of (1-&gt;4)-beta-D-glucosidic linkages in cellulose, lichenin and cereal beta-D-glucans.. In terms of biological role, rate of hydrolysis of cellulo-oligosaccharides increased with increasing chain length from cellotriose to cellopentaose. This chain is Endoglucanase B (CELB), found in Neocallimastix patriciarum (Rumen fungus).